We begin with the raw amino-acid sequence, 252 residues long: Imidazole glycerol phosphate synthase subunit HisF (252 aa).

Residues aspartate 11 and aspartate 130 contribute to the active site.

It belongs to the HisA/HisF family. As to quaternary structure, heterodimer of HisH and HisF.

Its subcellular location is the cytoplasm. It carries out the reaction 5-[(5-phospho-1-deoxy-D-ribulos-1-ylimino)methylamino]-1-(5-phospho-beta-D-ribosyl)imidazole-4-carboxamide + L-glutamine = D-erythro-1-(imidazol-4-yl)glycerol 3-phosphate + 5-amino-1-(5-phospho-beta-D-ribosyl)imidazole-4-carboxamide + L-glutamate + H(+). Its pathway is amino-acid biosynthesis; L-histidine biosynthesis; L-histidine from 5-phospho-alpha-D-ribose 1-diphosphate: step 5/9. Functionally, IGPS catalyzes the conversion of PRFAR and glutamine to IGP, AICAR and glutamate. The HisF subunit catalyzes the cyclization activity that produces IGP and AICAR from PRFAR using the ammonia provided by the HisH subunit. The protein is Imidazole glycerol phosphate synthase subunit HisF of Persephonella marina (strain DSM 14350 / EX-H1).